The following is a 303-amino-acid chain: UDP-3-O-acyl-N-acetylglucosamine deacetylase (303 aa).

Residues histidine 78, histidine 237, and aspartate 241 each contribute to the Zn(2+) site. Histidine 264 acts as the Proton donor in catalysis.

The protein belongs to the LpxC family. Zn(2+) is required as a cofactor.

It catalyses the reaction a UDP-3-O-[(3R)-3-hydroxyacyl]-N-acetyl-alpha-D-glucosamine + H2O = a UDP-3-O-[(3R)-3-hydroxyacyl]-alpha-D-glucosamine + acetate. Its pathway is glycolipid biosynthesis; lipid IV(A) biosynthesis; lipid IV(A) from (3R)-3-hydroxytetradecanoyl-[acyl-carrier-protein] and UDP-N-acetyl-alpha-D-glucosamine: step 2/6. Catalyzes the hydrolysis of UDP-3-O-myristoyl-N-acetylglucosamine to form UDP-3-O-myristoylglucosamine and acetate, the committed step in lipid A biosynthesis. The chain is UDP-3-O-acyl-N-acetylglucosamine deacetylase from Stenotrophomonas maltophilia (strain K279a).